Reading from the N-terminus, the 514-residue chain is 2,3-bisphosphoglycerate-independent phosphoglycerate mutase (514 aa).

Asp12 and Ser62 together coordinate Mn(2+). The active-site Phosphoserine intermediate is Ser62. Substrate-binding positions include His123, 153-154 (RD), Arg185, Arg191, 260-263 (RPDR), and Lys335. Mn(2+)-binding residues include Asp402, His406, Asp443, His444, and His462.

It belongs to the BPG-independent phosphoglycerate mutase family. Monomer. Mn(2+) is required as a cofactor.

The catalysed reaction is (2R)-2-phosphoglycerate = (2R)-3-phosphoglycerate. Its pathway is carbohydrate degradation; glycolysis; pyruvate from D-glyceraldehyde 3-phosphate: step 3/5. Functionally, catalyzes the interconversion of 2-phosphoglycerate and 3-phosphoglycerate. This chain is 2,3-bisphosphoglycerate-independent phosphoglycerate mutase, found in Lachnoclostridium phytofermentans (strain ATCC 700394 / DSM 18823 / ISDg) (Clostridium phytofermentans).